Consider the following 166-residue polypeptide: Probable dual specificity protein phosphatase H1 homolog (166 aa).

Residues 25 to 166 (DITKITDYVY…FLNQIIDKYI (142 aa)) enclose the Tyrosine-protein phosphatase domain. Cysteine 108 acts as the Phosphocysteine intermediate in catalysis.

This sequence belongs to the protein-tyrosine phosphatase family. Non-receptor class dual specificity subfamily. Homodimer.

Its subcellular location is the virion. It is found in the host cytoplasm. The enzyme catalyses O-phospho-L-tyrosyl-[protein] + H2O = L-tyrosyl-[protein] + phosphate. It catalyses the reaction O-phospho-L-seryl-[protein] + H2O = L-seryl-[protein] + phosphate. Serine/Tyrosine phosphatase which down-regulates cellular antiviral response by dephosphorylating activated STAT1 and blocking interferon (IFN)-stimulated innate immune responses. The protein is Probable dual specificity protein phosphatase H1 homolog of Vertebrata (FPV).